We begin with the raw amino-acid sequence, 450 residues long: UDP-N-acetylmuramoylalanine--D-glutamate ligase (450 aa).

ATP is bound at residue Gly115–Thr121.

The protein belongs to the MurCDEF family.

The protein resides in the cytoplasm. It catalyses the reaction UDP-N-acetyl-alpha-D-muramoyl-L-alanine + D-glutamate + ATP = UDP-N-acetyl-alpha-D-muramoyl-L-alanyl-D-glutamate + ADP + phosphate + H(+). It functions in the pathway cell wall biogenesis; peptidoglycan biosynthesis. Its function is as follows. Cell wall formation. Catalyzes the addition of glutamate to the nucleotide precursor UDP-N-acetylmuramoyl-L-alanine (UMA). The protein is UDP-N-acetylmuramoylalanine--D-glutamate ligase of Caldanaerobacter subterraneus subsp. tengcongensis (strain DSM 15242 / JCM 11007 / NBRC 100824 / MB4) (Thermoanaerobacter tengcongensis).